A 447-amino-acid chain; its full sequence is Argininosuccinate synthase (447 aa).

ATP contacts are provided by residues A17 to S25 and A43. Y99 provides a ligand contact to L-citrulline. ATP contacts are provided by G129 and T131. L-aspartate contacts are provided by T131, N135, and D136. N135 contributes to the L-citrulline binding site. D136 provides a ligand contact to ATP. L-citrulline contacts are provided by R139 and S192. D194 is an ATP binding site. T201, E203, and E280 together coordinate L-citrulline.

The protein belongs to the argininosuccinate synthase family. Type 2 subfamily. Homotetramer.

It localises to the cytoplasm. It carries out the reaction L-citrulline + L-aspartate + ATP = 2-(N(omega)-L-arginino)succinate + AMP + diphosphate + H(+). The protein operates within amino-acid biosynthesis; L-arginine biosynthesis; L-arginine from L-ornithine and carbamoyl phosphate: step 2/3. This Paracidovorax citrulli (strain AAC00-1) (Acidovorax citrulli) protein is Argininosuccinate synthase.